The following is a 319-amino-acid chain: HPr kinase/phosphorylase (319 aa).

Catalysis depends on residues His-141 and Lys-162. 156 to 163 (GNSGVGKS) is an ATP binding site. Ser-163 lines the Mg(2+) pocket. Asp-180 functions as the Proton acceptor; for phosphorylation activity. Proton donor; for dephosphorylation activity in the catalytic mechanism. The important for the catalytic mechanism of both phosphorylation and dephosphorylation stretch occupies residues 204–213 (MEIRGIGIID). Glu-205 contacts Mg(2+). Residue Arg-246 is part of the active site. Residues 267–272 (PVKVGR) are important for the catalytic mechanism of dephosphorylation.

It belongs to the HPrK/P family. Homohexamer. The cofactor is Mg(2+).

It catalyses the reaction [HPr protein]-L-serine + ATP = [HPr protein]-O-phospho-L-serine + ADP + H(+). It carries out the reaction [HPr protein]-O-phospho-L-serine + phosphate + H(+) = [HPr protein]-L-serine + diphosphate. In terms of biological role, catalyzes the ATP- as well as the pyrophosphate-dependent phosphorylation of a specific serine residue in HPr, a phosphocarrier protein of the phosphoenolpyruvate-dependent sugar phosphotransferase system (PTS). HprK/P also catalyzes the pyrophosphate-producing, inorganic phosphate-dependent dephosphorylation (phosphorolysis) of seryl-phosphorylated HPr (P-Ser-HPr). The two antagonistic activities of HprK/P are regulated by several intracellular metabolites, which change their concentration in response to the absence or presence of rapidly metabolisable carbon sources (glucose, fructose, etc.) in the growth medium. Therefore, by controlling the phosphorylation state of HPr, HPrK/P is a sensor enzyme that plays a major role in the regulation of carbon metabolism and sugar transport: it mediates carbon catabolite repression (CCR), and regulates PTS-catalyzed carbohydrate uptake and inducer exclusion. This is HPr kinase/phosphorylase from Lactobacillus gasseri (strain ATCC 33323 / DSM 20243 / BCRC 14619 / CIP 102991 / JCM 1131 / KCTC 3163 / NCIMB 11718 / NCTC 13722 / AM63).